A 609-amino-acid chain; its full sequence is UvrABC system protein C (609 aa).

The 78-residue stretch at 15–92 folds into the GIY-YIG domain; that stretch reads TGSGVYQMQD…IKQFRPRYNV (78 aa). In terms of domain architecture, UVR spans 202–237; that stretch reads DQVIIKLTERMEVASENLVFEEAAHYRDQIRQLRRL.

The protein belongs to the UvrC family. Interacts with UvrB in an incision complex.

It is found in the cytoplasm. Its function is as follows. The UvrABC repair system catalyzes the recognition and processing of DNA lesions. UvrC both incises the 5' and 3' sides of the lesion. The N-terminal half is responsible for the 3' incision and the C-terminal half is responsible for the 5' incision. The sequence is that of UvrABC system protein C from Coxiella burnetii (strain CbuK_Q154) (Coxiella burnetii (strain Q154)).